The primary structure comprises 188 residues: Holliday junction branch migration complex subunit RuvA (188 aa).

Residues 1–62 (MIVGVRGVLV…EDAQLLYGFL (62 aa)) form a domain I region. The interval 63-135 (ELGEKKLFER…LSGFDTELII (73 aa)) is domain II. Positions 135–139 (ISASE) are flexible linker. Positions 140 to 188 (PKSLAVAQASEALESLGFKKDKISKALGSCSAVDTAILVKEALKLLQTI) are domain III.

It belongs to the RuvA family. Homotetramer. Forms an RuvA(8)-RuvB(12)-Holliday junction (HJ) complex. HJ DNA is sandwiched between 2 RuvA tetramers; dsDNA enters through RuvA and exits via RuvB. An RuvB hexamer assembles on each DNA strand where it exits the tetramer. Each RuvB hexamer is contacted by two RuvA subunits (via domain III) on 2 adjacent RuvB subunits; this complex drives branch migration. In the full resolvosome a probable DNA-RuvA(4)-RuvB(12)-RuvC(2) complex forms which resolves the HJ.

The protein resides in the cytoplasm. The RuvA-RuvB-RuvC complex processes Holliday junction (HJ) DNA during genetic recombination and DNA repair, while the RuvA-RuvB complex plays an important role in the rescue of blocked DNA replication forks via replication fork reversal (RFR). RuvA specifically binds to HJ cruciform DNA, conferring on it an open structure. The RuvB hexamer acts as an ATP-dependent pump, pulling dsDNA into and through the RuvAB complex. HJ branch migration allows RuvC to scan DNA until it finds its consensus sequence, where it cleaves and resolves the cruciform DNA. The sequence is that of Holliday junction branch migration complex subunit RuvA from Sulfurimonas denitrificans (strain ATCC 33889 / DSM 1251) (Thiomicrospira denitrificans (strain ATCC 33889 / DSM 1251)).